The following is a 429-amino-acid chain: Glutamate-1-semialdehyde 2,1-aminomutase (429 aa).

N6-(pyridoxal phosphate)lysine is present on Lys-265.

The protein belongs to the class-III pyridoxal-phosphate-dependent aminotransferase family. HemL subfamily. As to quaternary structure, homodimer. Pyridoxal 5'-phosphate serves as cofactor.

It is found in the cytoplasm. The catalysed reaction is (S)-4-amino-5-oxopentanoate = 5-aminolevulinate. It functions in the pathway porphyrin-containing compound metabolism; protoporphyrin-IX biosynthesis; 5-aminolevulinate from L-glutamyl-tRNA(Glu): step 2/2. The protein is Glutamate-1-semialdehyde 2,1-aminomutase of Legionella pneumophila (strain Lens).